The primary structure comprises 205 residues: Quinone-oxidoreductase QR2 (205 aa).

Residues 5 to 192 (VYIVYYSTYG…LKQAFHQGMY (188 aa)) form the Flavodoxin-like domain. FMN contacts are provided by residues 11–15 (STYGH), 112–165 (IFFS…SPYG), and H136. Y13 serves as a coordination point for NAD(+).

It belongs to the WrbA family. The cofactor is FMN.

It catalyses the reaction a quinone + NADH + H(+) = a quinol + NAD(+). The catalysed reaction is a quinone + NADPH + H(+) = a quinol + NADP(+). Inhibited by dicumarol. NAD(P)H:quinone oxidoreductase reducing quinones by a two-electron transfer mechanism. Can use either NADPH or NADH as electron donor. Can use menadione, 5-hydroxy-1,4-naphthoquinone (juglone) and 2,6-dimethoxy-p-benzoquinone (DMBQ) as substrates. Mitigates the toxicity of exogenous quinones in the rhizosphere. This Triphysaria versicolor (Yellow owl's clover) protein is Quinone-oxidoreductase QR2.